A 221-amino-acid polypeptide reads, in one-letter code: UPF0328 protein ECU11_2110 (221 aa).

Belongs to the UPF0328 family.

The sequence is that of UPF0328 protein ECU11_2110 from Encephalitozoon cuniculi (strain GB-M1) (Microsporidian parasite).